Reading from the N-terminus, the 122-residue chain is Large ribosomal subunit protein uL14 (122 aa).

It belongs to the universal ribosomal protein uL14 family. As to quaternary structure, part of the 50S ribosomal subunit. Forms a cluster with proteins L3 and L19. In the 70S ribosome, L14 and L19 interact and together make contacts with the 16S rRNA in bridges B5 and B8.

Functionally, binds to 23S rRNA. Forms part of two intersubunit bridges in the 70S ribosome. This chain is Large ribosomal subunit protein uL14, found in Delftia acidovorans (strain DSM 14801 / SPH-1).